The primary structure comprises 187 residues: MRRSMKISAEMYKLLIERTLDGFSVIELRDEFIVIKDSLIDPDEAYKKVYRQILRFIKKGWLNGEGSGRQKRYFQTDTFKALHAEPKSENVDIEIVLNQDYSVLVSERNQYKGELEIVLGEIDEYQSLNIRFPELEPKLITLLDEAKERSACLLGKVNGLTNVLKVLSGQKIVHQKFKTKALLFERT.

Its function is as follows. Represses the transcription of several genes encoded within the Vibrio 7th pandemic island-1 (VSP-1), including dncV, VC_0176, VC_0178 and VC_0180. The sequence is that of Transcriptional regulator VspR (vspR) from Vibrio cholerae serotype O1 (strain ATCC 39315 / El Tor Inaba N16961).